Here is a 345-residue protein sequence, read N- to C-terminus: Annexin A9 (345 aa).

Annexin repeat units follow at residues 41 to 112, 113 to 184, 197 to 266, and 270 to 341; these read FSVD…ALLQ, PAAQ…ALSK, NLEE…SLAS, and NTAL…ALCR.

Belongs to the annexin family. In terms of assembly, homodimer.

In terms of biological role, may act as a low affinity receptor for acetylcholine. This is Annexin A9 (Anxa9) from Mus musculus (Mouse).